The following is a 198-amino-acid chain: Ribonuclease HII (198 aa).

An RNase H type-2 domain is found at 10–198 (HLVAGVDEVG…PVRRALGIAS (189 aa)). Residues aspartate 16, glutamate 17, and aspartate 108 each contribute to the a divalent metal cation site.

Belongs to the RNase HII family. Mn(2+) is required as a cofactor. Mg(2+) serves as cofactor.

It localises to the cytoplasm. It catalyses the reaction Endonucleolytic cleavage to 5'-phosphomonoester.. Endonuclease that specifically degrades the RNA of RNA-DNA hybrids. This is Ribonuclease HII from Cronobacter sakazakii (strain ATCC BAA-894) (Enterobacter sakazakii).